Reading from the N-terminus, the 130-residue chain is Chorion class B protein PC10 (130 aa).

A left arm region spans residues 1-22 (GAWNGRLGCGCGGIAPAAELAA). The tract at residues 23-93 (SYGGGLGVAS…GNGALGITAE (71 aa)) is central domain. The interval 94–130 (RGYGAGIGYEGLGLGYGAGIGYKGYGLGGCGCGCGRL) is right arm (Gly-rich tandem repeats).

It belongs to the chorion protein family.

In terms of biological role, this protein is one of many from the eggshell of the silk moth. In Antheraea polyphemus (Polyphemus moth), this protein is Chorion class B protein PC10.